Here is a 235-residue protein sequence, read N- to C-terminus: MOB kinase activator 2 (235 aa).

The interval 1–22 (MDWLMGKSKAKPNGKKPAAEEK) is disordered. Residues Cys78, Cys83, His157, and His162 each coordinate Zn(2+). Residues 213 to 235 (NSGATGDGANSGASGAQNHVKER) form a disordered region.

This sequence belongs to the MOB1/phocein family. Binds STK38 and STK38L. Post-translationally, phosphorylated.

Its subcellular location is the nucleus. The protein localises to the cytoplasm. It is found in the perinuclear region. Functionally, stimulates the autophosphorylation and kinase activity of STK38 and STK38L. The chain is MOB kinase activator 2 (Mob2) from Mus musculus (Mouse).